Here is a 1392-residue protein sequence, read N- to C-terminus: ATP-dependent helicase/nuclease subunit A (1392 aa).

Positions 3–489 constitute a UvrD-like helicase ATP-binding domain; sequence NPKWTPAQQA…IDLNQNFRSR (487 aa). 24–31 contributes to the ATP binding site; the sequence is AAAGSGKT. Disordered regions lie at residues 291–319, 555–594, and 1051–1126; these read RGSKKNLPDSLIDEENSKRLREESKKARD, KRGAEDAATEVDSPAKGEGEEFEQNREPESGDDESSLEEA, and GPVQ…LDTK. 2 stretches are compositionally biased toward basic and acidic residues: residues 305-319 and 567-583; these read ENSKRLREESKKARD and SPAKGEGEEFEQNREPE. In terms of domain architecture, UvrD-like helicase C-terminal spans 556–886; the sequence is RGAEDAATEV…RFITVHSSKG (331 aa). Residues 584–594 are compositionally biased toward acidic residues; the sequence is SGDDESSLEEA. Over residues 1088-1113 the composition is skewed to basic and acidic residues; it reads ASGKTEIPGETKNSEETKTSEDKKNL.

It belongs to the helicase family. AddA subfamily. As to quaternary structure, heterodimer of AddA and AddB/RexB. Mg(2+) serves as cofactor.

It carries out the reaction Couples ATP hydrolysis with the unwinding of duplex DNA by translocating in the 3'-5' direction.. The catalysed reaction is ATP + H2O = ADP + phosphate + H(+). Functionally, the heterodimer acts as both an ATP-dependent DNA helicase and an ATP-dependent, dual-direction single-stranded exonuclease. Recognizes the chi site generating a DNA molecule suitable for the initiation of homologous recombination. The AddA nuclease domain is required for chi fragment generation; this subunit has the helicase and 3' -&gt; 5' nuclease activities. The chain is ATP-dependent helicase/nuclease subunit A from Desulfitobacterium hafniense (strain DSM 10664 / DCB-2).